The primary structure comprises 646 residues: MAQISLTFPDGKAREFPAGITPAEVAASISTSLGKKAISASVDGRHYDLQWPIETDAKIAIHTMADEAQALELIRHDLAHIMARAVQELWPDVKVTIGPVVANGWYYDFDREETFTPEDLGAIEKRMKEIINAREAVKTELWERARAIGYYEERGEPFKVELVQAIPEDQSIRMYWHGGWQDLCRGPHLQHTGQVPADAFKLMSVAGAYWRGDSANKQLQRIYGVAFKTRDELKAYLHMLEEAAKRDHRKLGREMELFHLQEEAPGMVFWHPNGWQIYRTLEDYMRGRLRQAGYKEIRTPQVVDRKLWEASGHWEAYKENMFIVEVEEEHAKEKRINALKPMNCPCHVQVYNQGLKSYRDLPLRLAEFGSCHRYESSGSMHGLMRVRGFVQDDAHIFCTEDQIESECAAFIELLSSVYKDLGFDSFEIKLSTRPEVRIGSDEAWDKVETALENAIRKVGAAYEIDPGEGAFYGPKLDFKLTDAIGRKWQCGTFQVDPNLPTRLGAEYIGEDGAKHRPYMLHRAILGSFERFIGILIENYAGKLPFWLAPRQVVVASIVSDADPYVAEVVAALRARGVRAEADTRNEKINYKVREHSVGKVPVILAIGMQEVEARSVSVRRLGETRTESMGLDQVVDQLAADARIPG.

The TGS domain occupies 1 to 63; sequence MAQISLTFPD…ETDAKIAIHT (63 aa). Positions 247–544 are catalytic; it reads DHRKLGREME…LIENYAGKLP (298 aa). Zn(2+) is bound by residues cysteine 344, histidine 395, and histidine 521.

This sequence belongs to the class-II aminoacyl-tRNA synthetase family. Homodimer. It depends on Zn(2+) as a cofactor.

Its subcellular location is the cytoplasm. It catalyses the reaction tRNA(Thr) + L-threonine + ATP = L-threonyl-tRNA(Thr) + AMP + diphosphate + H(+). Its function is as follows. Catalyzes the attachment of threonine to tRNA(Thr) in a two-step reaction: L-threonine is first activated by ATP to form Thr-AMP and then transferred to the acceptor end of tRNA(Thr). Also edits incorrectly charged L-seryl-tRNA(Thr). The protein is Threonine--tRNA ligase of Cereibacter sphaeroides (strain ATCC 17029 / ATH 2.4.9) (Rhodobacter sphaeroides).